We begin with the raw amino-acid sequence, 170 residues long: Lipoprotein signal peptidase (170 aa).

A run of 3 helical transmembrane segments spans residues 12-32 (WYWV…WVLA), 67-87 (WQRW…TVWL), and 93-113 (GLWR…GNLI). Active-site residues include Asp-123 and Asp-141. Residues 133–153 (HFPAFNIADSAICVGAGLIIL) form a helical membrane-spanning segment.

This sequence belongs to the peptidase A8 family.

It is found in the cell inner membrane. It carries out the reaction Release of signal peptides from bacterial membrane prolipoproteins. Hydrolyzes -Xaa-Yaa-Zaa-|-(S,diacylglyceryl)Cys-, in which Xaa is hydrophobic (preferably Leu), and Yaa (Ala or Ser) and Zaa (Gly or Ala) have small, neutral side chains.. It participates in protein modification; lipoprotein biosynthesis (signal peptide cleavage). Its function is as follows. This protein specifically catalyzes the removal of signal peptides from prolipoproteins. The chain is Lipoprotein signal peptidase from Shewanella loihica (strain ATCC BAA-1088 / PV-4).